The primary structure comprises 1171 residues: Protein diaphanous homolog 3 (1171 aa).

A compositionally biased stretch (basic and acidic residues) spans 1-15 (MERHRARALGRDSKS). The tract at residues 1–40 (MERHRARALGRDSKSSRRKGLQSAPPAGPYEPGEKRPKLH) is disordered. A Nuclear localization signal motif is present at residues 16 to 39 (SRRKGLQSAPPAGPYEPGEKRPKL). Position 47 is a phosphothreonine (T47). S56 carries the phosphoserine modification. Residues 60–95 (PGSKKERPPLPHLKTVSGISDSSSLSSETMENNPKA) form a disordered region. Residues 76 to 86 (SGISDSSSLSS) are compositionally biased toward low complexity. The GBD/FH3 domain occupies 93–455 (PKALPESEVL…QIVLHRDGTD (363 aa)). Residue S154 is modified to Phosphoserine. 2 coiled-coil regions span residues 373–403 (EHKEEDLSEFFHRLEDIRAELDEASDVYSML) and 478–533 (QAKL…FGAL). Residues 532-601 (ALPPGTKIPL…PPPPLGFLGG (70 aa)) are disordered. The 71-residue stretch at 540 to 610 (PLQPSVEGEA…GQSSIPLNLP (71 aa)) folds into the FH1 domain. The segment covering 553-596 (ALPPAPPALSGGVPPPPPPPPPPPPPLPGMPMPFGGPVPPPPPL) has biased composition (pro residues). The residue at position 604 (S604) is a Phosphoserine. One can recognise an FH2 domain in the interval 615–1013 (PKKEFKPEIS…EKRARIAKER (399 aa)). Coiled-coil stretches lie at residues 887–918 (DKASRVSVEMLEKNVKQMGRQLQQLEKNLETF) and 988–1038 (MLAL…GDET). The DAD domain occupies 1036 to 1066 (DETGVMDSLLEALQSGAAFRDRRKRTPKLKD). 2 positions are modified to phosphoserine: S1072 and S1157. Positions 1162 to 1171 (EALLARLRAL) match the Nuclear export signal motif.

This sequence belongs to the formin homology family. Diaphanous subfamily. In terms of processing, ubiquitinated.

It localises to the cytoplasm. The protein localises to the nucleus. Its function is as follows. Actin nucleation and elongation factor required for the assembly of F-actin structures, such as actin cables and stress fibers. Required for cytokinesis, stress fiber formation and transcriptional activation of the serum response factor. Binds to GTP-bound form of Rho and to profilin: acts in a Rho-dependent manner to recruit profilin to the membrane, where it promotes actin polymerization. DFR proteins couple Rho and Src tyrosine kinase during signaling and the regulation of actin dynamics. Also acts as an actin nucleation and elongation factor in the nucleus by promoting nuclear actin polymerization inside the nucleus to drive serum-dependent SRF-MRTFA activity. The sequence is that of Protein diaphanous homolog 3 (Diaph3) from Mus musculus (Mouse).